A 191-amino-acid chain; its full sequence is uncharacterized protein (191 aa).

This is an uncharacterized protein from Methanocaldococcus jannaschii (strain ATCC 43067 / DSM 2661 / JAL-1 / JCM 10045 / NBRC 100440) (Methanococcus jannaschii).